Reading from the N-terminus, the 189-residue chain is Translation initiation factor IF-3 (189 aa).

The protein belongs to the IF-3 family. In terms of assembly, monomer.

The protein localises to the cytoplasm. In terms of biological role, IF-3 binds to the 30S ribosomal subunit and shifts the equilibrium between 70S ribosomes and their 50S and 30S subunits in favor of the free subunits, thus enhancing the availability of 30S subunits on which protein synthesis initiation begins. The polypeptide is Translation initiation factor IF-3 (Corynebacterium glutamicum (strain R)).